The primary structure comprises 336 residues: Dihydroorotate dehydrogenase (quinone) (336 aa).

FMN contacts are provided by residues 62-66 (AGLDK) and Thr-86. Residue Lys-66 coordinates substrate. A substrate-binding site is contributed by 111-115 (NRMGF). Residues Asn-139 and Asn-172 each contribute to the FMN site. Asn-172 is a binding site for substrate. Catalysis depends on Ser-175, which acts as the Nucleophile. Asn-177 serves as a coordination point for substrate. Positions 217 and 245 each coordinate FMN. A substrate-binding site is contributed by 246 to 247 (NT). FMN contacts are provided by residues Gly-268, Gly-297, and 318-319 (YS).

Belongs to the dihydroorotate dehydrogenase family. Type 2 subfamily. In terms of assembly, monomer. FMN is required as a cofactor.

It is found in the cell membrane. It carries out the reaction (S)-dihydroorotate + a quinone = orotate + a quinol. It participates in pyrimidine metabolism; UMP biosynthesis via de novo pathway; orotate from (S)-dihydroorotate (quinone route): step 1/1. Its function is as follows. Catalyzes the conversion of dihydroorotate to orotate with quinone as electron acceptor. The protein is Dihydroorotate dehydrogenase (quinone) of Baumannia cicadellinicola subsp. Homalodisca coagulata.